The chain runs to 555 residues: Glucose-6-phosphate isomerase (555 aa).

E365 acts as the Proton donor in catalysis. Catalysis depends on residues H396 and K522.

It belongs to the GPI family.

Its subcellular location is the cytoplasm. The catalysed reaction is alpha-D-glucose 6-phosphate = beta-D-fructose 6-phosphate. It participates in carbohydrate biosynthesis; gluconeogenesis. It functions in the pathway carbohydrate degradation; glycolysis; D-glyceraldehyde 3-phosphate and glycerone phosphate from D-glucose: step 2/4. Catalyzes the reversible isomerization of glucose-6-phosphate to fructose-6-phosphate. The polypeptide is Glucose-6-phosphate isomerase (Psychrobacter arcticus (strain DSM 17307 / VKM B-2377 / 273-4)).